We begin with the raw amino-acid sequence, 298 residues long: MQDFSSLLLKLQEYWKNQGCLVIQPYDIPAGAGTFHPATLLRSLDKKPWNVAYVAPSRRPTDGRYGENPNRLGSYYQFQVVIKPSPSNIQELYLKSLEVLGINLNEHDIRFVEDNWESPTLGAWGLGWEVWLDGMEVTQFTYFQQVGGIACSPIPVEITYGLERLAMYVQKVENILEIEWAKKDNDSVRYMQVHLESEYEFSKYHFEAASVKRLLEMFKNAQAEALHCLENKLPLPAYDFVMLCSHFFNILDARKAISVAERQNYILQIRDLAKGCALLYKEQEEEREERLKNALTKA.

This sequence belongs to the class-II aminoacyl-tRNA synthetase family. As to quaternary structure, tetramer of two alpha and two beta subunits.

The protein localises to the cytoplasm. It catalyses the reaction tRNA(Gly) + glycine + ATP = glycyl-tRNA(Gly) + AMP + diphosphate. This is Glycine--tRNA ligase alpha subunit from Helicobacter pylori (strain P12).